A 193-amino-acid polypeptide reads, in one-letter code: Non-specific lipid transfer protein GPI-anchored 10 (193 aa).

Residues 1–24 (MASSTLLITLLISLSAFFLRMVLA) form the signal peptide. 4 disulfides stabilise this stretch: cysteine 30–cysteine 71, cysteine 40–cysteine 55, cysteine 56–cysteine 98, and cysteine 69–cysteine 107. N-linked (GlcNAc...) asparagine glycosylation is found at asparagine 76, asparagine 87, and asparagine 103. The segment at 109-140 (SSFPGEAPSDSSSVAPPPSSSTGSQISQGAKN) is disordered. The segment covering 116–132 (PSDSSSVAPPPSSSTGS) has biased composition (low complexity). Asparagine 140 carries an N-linked (GlcNAc...) asparagine glycan. Serine 168 carries the GPI-anchor amidated serine lipid modification. A propeptide spans 169 to 193 (SGSKSEIQLTIFALAAILPAALLLI) (removed in mature form).

It belongs to the plant LTP family.

The protein resides in the cell membrane. In terms of biological role, probable lipid transfer protein. The protein is Non-specific lipid transfer protein GPI-anchored 10 of Arabidopsis thaliana (Mouse-ear cress).